The sequence spans 270 residues: 3-phenylpropionate-dihydrodiol/cinnamic acid-dihydrodiol dehydrogenase (270 aa).

10 to 34 (FITGGGSGLGLALVERFIEKGAQVA) is an NAD(+) binding site. Serine 143 is a substrate binding site. Tyrosine 156 (proton acceptor) is an active-site residue.

The protein belongs to the short-chain dehydrogenases/reductases (SDR) family.

The enzyme catalyses 3-(cis-5,6-dihydroxycyclohexa-1,3-dien-1-yl)propanoate + NAD(+) = 3-(2,3-dihydroxyphenyl)propanoate + NADH + H(+). It catalyses the reaction (2E)-3-(cis-5,6-dihydroxycyclohexa-1,3-dien-1-yl)prop-2-enoate + NAD(+) = (2E)-3-(2,3-dihydroxyphenyl)prop-2-enoate + NADH + H(+). It functions in the pathway aromatic compound metabolism; 3-phenylpropanoate degradation. Its function is as follows. Converts 3-phenylpropionate-dihydrodiol (PP-dihydrodiol) and cinnamic acid-dihydrodiol (CI-dihydrodiol) into 3-(2,3-dihydroxylphenyl)propanoic acid (DHPP) and 2,3-dihydroxicinnamic acid (DHCI), respectively. In Escherichia coli, this protein is 3-phenylpropionate-dihydrodiol/cinnamic acid-dihydrodiol dehydrogenase (hcaB).